Reading from the N-terminus, the 189-residue chain is ATP-dependent protease subunit HslV (189 aa).

Threonine 12 is a catalytic residue. Residues alanine 172, cysteine 175, and threonine 178 each coordinate Na(+).

Belongs to the peptidase T1B family. HslV subfamily. A double ring-shaped homohexamer of HslV is capped on each side by a ring-shaped HslU homohexamer. The assembly of the HslU/HslV complex is dependent on binding of ATP.

The protein localises to the cytoplasm. The enzyme catalyses ATP-dependent cleavage of peptide bonds with broad specificity.. Allosterically activated by HslU binding. In terms of biological role, protease subunit of a proteasome-like degradation complex believed to be a general protein degrading machinery. This chain is ATP-dependent protease subunit HslV, found in Anaplasma phagocytophilum (strain HZ).